The chain runs to 382 residues: Glutamate 5-kinase (382 aa).

Lys-15 lines the ATP pocket. The substrate site is built by Ser-62, Asp-149, and Asn-161. ATP is bound at residue 181-182 (TD). Positions 288-366 (RGSVSVDAGA…VEIERLLGYS (79 aa)) constitute a PUA domain.

This sequence belongs to the glutamate 5-kinase family.

The protein localises to the cytoplasm. The enzyme catalyses L-glutamate + ATP = L-glutamyl 5-phosphate + ADP. It functions in the pathway amino-acid biosynthesis; L-proline biosynthesis; L-glutamate 5-semialdehyde from L-glutamate: step 1/2. Catalyzes the transfer of a phosphate group to glutamate to form L-glutamate 5-phosphate. The polypeptide is Glutamate 5-kinase (Delftia acidovorans (strain DSM 14801 / SPH-1)).